The primary structure comprises 326 residues: Homocysteine S-methyltransferase 1 (326 aa).

One can recognise a Hcy-binding domain in the interval 9–323 (LLEDLIKKCG…STINAISRDL (315 aa)). Zn(2+) contacts are provided by Cys-241, Cys-308, and Cys-309.

Monomer. It depends on Zn(2+) as a cofactor. In terms of tissue distribution, expressed predominantly in roots. Expressed in rosette leaves, cauline leaves and developing seeds.

It carries out the reaction S-methyl-L-methionine + L-homocysteine = 2 L-methionine + H(+). With respect to regulation, strongly inhibited by methionine. Catalyzes methyl transfer from S-methylmethionine (SMM) to adenosyl-L-homocysteine (AdoMet). SMM degradation (by HMT-1, HMT-2 and HMT-3) and biosynthesis (by MMT1) constitute the SMM cycle in plants, which is probably required to achieve short term control of AdoMet level. The chain is Homocysteine S-methyltransferase 1 (HMT-1) from Arabidopsis thaliana (Mouse-ear cress).